The chain runs to 327 residues: DNA repair protein XRCC4 (327 aa).

Positions 1–211 (MERKVSRISL…QLEKNLKPER (211 aa)) are interaction with IFFO1. The residue at position 53 (S53) is a Phosphoserine. Coiled coils occupy residues 133–153 (IAEKQAKNEHLQKENDRLLRD) and 183–213 (LNEKKTKIRSLHKLLDEIQQLEKNLKPERET). Interaction with LIG4 stretches follow at residues 179–210 (FILVLNEKKTKIRSLHKLLDEIQQLEKNLKPE) and 179–211 (FILVLNEKKTKIRSLHKLLDEIQQLEKNLKPER). S192 carries the phosphoserine modification. K208 is covalently cross-linked (Glycyl lysine isopeptide (Lys-Gly) (interchain with G-Cter in SUMO)). Y226 is modified (phosphotyrosine). S229 bears the Phosphoserine mark. T230 bears the Phosphothreonine mark. A phosphoserine mark is found at S249 and S253. Residues 255–327 (DVTDIAPSRK…RNSSPEDIFD (73 aa)) are disordered. The Nuclear localization signal signature appears at 263-268 (RKRRHH). K289 participates in a covalent cross-link: Glycyl lysine isopeptide (Lys-Gly) (interchain with G-Cter in ubiquitin). S294, S295, S308, and S313 each carry phosphoserine. Residues 308-327 (SAGNMSLETLRNSSPEDIFD) show a composition bias toward polar residues. The residue at position 316 (T316) is a Phosphothreonine. Phosphoserine occurs at positions 320 and 321.

It belongs to the XRCC4-XLF family. XRCC4 subfamily. In terms of assembly, homodimer and homotetramer in solution. Interacts with NHEJ1/XLF; the interaction is direct and is mediated via a head-to-head interaction between N-terminal head regions. Interacts with LIG4; the LIG4-XRCC4 subcomplex has a 1:2 stoichiometry and XRCC4 is required for LIG4 stability. Component of the core long-range non-homologous end joining (NHEJ) complex (also named DNA-PK complex) composed of PRKDC, LIG4, XRCC4, XRCC6/Ku70, XRCC5/Ku86 and NHEJ1/XLF. Additional component of the NHEJ complex includes PAXX. Following autophosphorylation, PRKDC dissociates from DNA, leading to formation of the short-range NHEJ complex, composed of LIG4, XRCC4, XRCC6/Ku70, XRCC5/Ku86 and NHEJ1/XLF. Interacts with PRKDC; the interaction is direct. Interacts with XRCC6/Ku70; the interaction is direct. Interacts with APTX and APLF. Forms a heterotetramer with IFFO1; the interaction involves LIG4-free XRCC4 and leads to the relocalization of IFFO1 to the sites of DNA damage. Interacts with PNKP; mainly interacts with PNKP when phosphorylated at Thr-230, but is also able to interact at much lower level with PNKP when not unphosphorylated. Interacts with POLL (DNA polymerase lambda). As to quaternary structure, interacts with XKR4; interacts with the processed form of XKR4, which is cleaved by caspase. Phosphorylated by PRKDC at the C-terminus in response to DNA damage; Ser-253 constitutes the main phosphorylation sites. Phosphorylations by PRKDC at the C-terminus of XRCC4 and NHEJ1/XLF are highly redundant and regulate ability of the XRCC4-NHEJ1/XLF subcomplex to bridge DNA. Phosphorylation by PRKDC does not prevent interaction with NHEJ1/XLF but disrupts ability to bridge DNA and promotes detachment from DNA. Phosphorylation at Ser-320 and Ser-321 by PRKDC promotes recognition by the SCF(FBXW7) complex and subsequent ubiquitination via 'Lys-63'-linked ubiquitin. Phosphorylation at Thr-230 by CK2 promotes interaction with PNKP; regulating PNKP activity and localization to DNA damage sites. Phosphorylation by CK2 promotes interaction with APTX. Post-translationally, ubiquitinated at Lys-289 by the SCF(FBXW7) complex via 'Lys-63'-linked ubiquitination, thereby promoting double-strand break repair: the SCF(FBXW7) complex specifically recognizes XRCC4 when phosphorylated at Ser-320 and Ser-321 by PRKDC, and 'Lys-63'-linked ubiquitination facilitates DNA non-homologous end joining (NHEJ) by enhancing association with XRCC5/Ku80 and XRCC6/Ku70. Monoubiquitinated. In terms of processing, undergoes proteolytic processing by caspase-3 (CASP3). This generates the protein XRCC4, C-terminus (XRCC4/C), which translocates to the cytoplasm and activates phospholipid scramblase activity of XKR4, thereby promoting phosphatidylserine exposure on apoptotic cell surface.

The protein localises to the nucleus. Its subcellular location is the chromosome. It is found in the cytoplasm. Its function is as follows. DNA non-homologous end joining (NHEJ) core factor, required for double-strand break repair and V(D)J recombination. Acts as a scaffold protein that regulates recruitment of other proteins to DNA double-strand breaks (DSBs). Associates with NHEJ1/XLF to form alternating helical filaments that bridge DNA and act like a bandage, holding together the broken DNA until it is repaired. The XRCC4-NHEJ1/XLF subcomplex binds to the DNA fragments of a DSB in a highly diffusive manner and robustly bridges two independent DNA molecules, holding the broken DNA fragments in close proximity to one other. The mobility of the bridges ensures that the ends remain accessible for further processing by other repair factors. Plays a key role in the NHEJ ligation step of the broken DNA during DSB repair via direct interaction with DNA ligase IV (LIG4): the LIG4-XRCC4 subcomplex reseals the DNA breaks after the gap filling is completed. XRCC4 stabilizes LIG4, regulates its subcellular localization and enhances LIG4's joining activity. Binding of the LIG4-XRCC4 subcomplex to DNA ends is dependent on the assembly of the DNA-dependent protein kinase complex DNA-PK to these DNA ends. Promotes displacement of PNKP from processed strand break termini. Acts as an activator of the phospholipid scramblase activity of XKR4. This form, which is generated upon caspase-3 (CASP3) cleavage, translocates into the cytoplasm and interacts with XKR4, thereby promoting phosphatidylserine scramblase activity of XKR4 and leading to phosphatidylserine exposure on apoptotic cell surface. This is DNA repair protein XRCC4 from Cricetulus griseus (Chinese hamster).